We begin with the raw amino-acid sequence, 108 residues long: MEHTAHIFPIIIKGSPPVMSSNPRRQYRLNLRSIKCLKEPRVRVWQAQWPLEPALSAAKMPRAAHAHAPHAFEIQASVPAGLQGSGYFAPSVRSDLRLPRSFLFLNKK.

This is an uncharacterized protein from Saccharomyces cerevisiae (strain ATCC 204508 / S288c) (Baker's yeast).